The chain runs to 385 residues: T-box transcription factor TBX10 (385 aa).

The tract at residues 22–61 (TTSSGWEPRLGSPFPSGPCTSSTGAQAVAEPTGQGPKNPR) is disordered. The segment at residues 69–252 (LEMKPLWEEF…SNPFAKGFRE (184 aa)) is a DNA-binding region (T-box).

Its subcellular location is the nucleus. Probable transcriptional regulator involved in developmental processes. The chain is T-box transcription factor TBX10 (TBX10) from Homo sapiens (Human).